A 620-amino-acid chain; its full sequence is Chaperone protein HscA homolog (620 aa).

This sequence belongs to the heat shock protein 70 family.

Functionally, chaperone involved in the maturation of iron-sulfur cluster-containing proteins. Has a low intrinsic ATPase activity which is markedly stimulated by HscB. The polypeptide is Chaperone protein HscA homolog (Herminiimonas arsenicoxydans).